A 218-amino-acid chain; its full sequence is MEGGGRRVFSNYDLQQVTSSSTTIQENMNFLVPFEETNVLTFFSSSSSSSLSSPSFPIHNSSSTTTTHAPLGFSNNLQGGGPLGSKVVNDDQENFGGGTNNDAHSNSWWRSNSGSGDMKNKVKIRRKLREPRFCFQTKSDVDVLDDGYKWRKYGQKVVKNSLHPRSYYRCTHNNCRVKKRVERLSEDCRMVITTYEGRHNHIPSDDSTSPDHDCLSSF.

A compositionally biased stretch (low complexity) spans 49–63 (SSLSSPSFPIHNSSS). Disordered regions lie at residues 49 to 120 (SSLS…DMKN) and 199 to 218 (HNHI…LSSF). A compositionally biased stretch (polar residues) spans 64 to 77 (TTTTHAPLGFSNNL). Over residues 105–116 (SNSWWRSNSGSG) the composition is skewed to low complexity. Positions 139–204 (SDVDVLDDGY…YEGRHNHIPS (66 aa)) form a DNA-binding region, WRKY.

Belongs to the WRKY group II-c family.

The protein localises to the nucleus. Its function is as follows. Transcription factor. Interacts specifically with the W box (5'-(T)TGAC[CT]-3'), a frequently occurring elicitor-responsive cis-acting element. The chain is Probable WRKY transcription factor 12 (WRKY12) from Arabidopsis thaliana (Mouse-ear cress).